We begin with the raw amino-acid sequence, 233 residues long: Large ribosomal subunit protein uL1 (233 aa).

Belongs to the universal ribosomal protein uL1 family. In terms of assembly, part of the 50S ribosomal subunit.

Its function is as follows. Binds directly to 23S rRNA. The L1 stalk is quite mobile in the ribosome, and is involved in E site tRNA release. Functionally, protein L1 is also a translational repressor protein, it controls the translation of the L11 operon by binding to its mRNA. The chain is Large ribosomal subunit protein uL1 from Thermotoga maritima (strain ATCC 43589 / DSM 3109 / JCM 10099 / NBRC 100826 / MSB8).